Consider the following 284-residue polypeptide: Probable palmitoyltransferase ZDHHC24 (284 aa).

The Cytoplasmic segment spans residues 1–18; that stretch reads MGESWAARGAEGAPARMP. Residues 19–39 traverse the membrane as a helical segment; that stretch reads LVLTALWAAVVVLELAYVMVL. The Extracellular portion of the chain corresponds to 40–52; the sequence is GPGPPPLGPLARA. A helical transmembrane segment spans residues 53-73; it reads LQLALAAYQLLNLLGNVVLFL. At 74–137 the chain is on the cytoplasmic side; that stretch reads RSDPSIRGVM…GCCVGFHNYR (64 aa). In terms of domain architecture, DHHC spans 94–144; that stretch reads AYCYQCQSQVPPRSGHCSACRVCILRRDHHCRLLGCCVGFHNYRPFLCLLL. C124 serves as the catalytic S-palmitoyl cysteine intermediate. The helical transmembrane segment at 138 to 158 threads the bilayer; that stretch reads PFLCLLLHSAGVLLHISVLLG. Topologically, residues 159 to 166 are extracellular; the sequence is PALSALLQ. A helical membrane pass occupies residues 167–187; sequence AHSALYTVALLLLPWLMLLTG. Over 188–195 the chain is Cytoplasmic; sequence KVSLAQFA. The chain crosses the membrane as a helical span at residues 196–216; it reads LAFVVDTCVAGALLCGAGLLF. Topologically, residues 217–284 are extracellular; sequence HGMLLLRGQT…TPGDVGLVTS (68 aa).

Belongs to the DHHC palmitoyltransferase family.

Its subcellular location is the membrane. It catalyses the reaction L-cysteinyl-[protein] + hexadecanoyl-CoA = S-hexadecanoyl-L-cysteinyl-[protein] + CoA. In terms of biological role, probable palmitoyltransferase that could catalyze the addition of palmitate onto various protein substrates. In Mus musculus (Mouse), this protein is Probable palmitoyltransferase ZDHHC24.